Here is a 171-residue protein sequence, read N- to C-terminus: Adenine phosphoribosyltransferase (171 aa).

The protein belongs to the purine/pyrimidine phosphoribosyltransferase family. In terms of assembly, homodimer.

Its subcellular location is the cytoplasm. It catalyses the reaction AMP + diphosphate = 5-phospho-alpha-D-ribose 1-diphosphate + adenine. It participates in purine metabolism; AMP biosynthesis via salvage pathway; AMP from adenine: step 1/1. Catalyzes a salvage reaction resulting in the formation of AMP, that is energically less costly than de novo synthesis. This is Adenine phosphoribosyltransferase from Acetivibrio thermocellus (strain ATCC 27405 / DSM 1237 / JCM 9322 / NBRC 103400 / NCIMB 10682 / NRRL B-4536 / VPI 7372) (Clostridium thermocellum).